A 222-amino-acid polypeptide reads, in one-letter code: MQSVLVLAAIVPAALAQTYYGCYTEIPTRALTGAVPLIDYEAMTLADCEAHCTGFDLWGLEYGGECYCGNSLAQGSFPAFSTDCTMPCPGDATLTSVCGGPNRLSLYGTSETAPESLPYPHDPPVTTTQYEGCYTEVTEGARALAGASGFSLTDMTVGGCGGYCRDSGFTWFGLEYSAECYCGSELSVNSTLAAEEDCAMPCSGAAGEVCGGSNRLSVYQWV.

WSC domains follow at residues 16-110 and 127-222; these read AQTY…YGTS and TTQY…YQWV.

Inhibits the growth of the fungus P.tritici-repentis. The sequence is that of Putative fungistatic metabolite from Chaetomium globosum (strain ATCC 6205 / CBS 148.51 / DSM 1962 / NBRC 6347 / NRRL 1970) (Soil fungus).